A 469-amino-acid polypeptide reads, in one-letter code: Acetyl-CoA decarbonylase/synthase complex subunit beta 1 (469 aa).

[Ni-Fe-S] cluster-binding residues include cysteine 189, cysteine 192, cysteine 278, and cysteine 280.

Belongs to the CdhC family. As to quaternary structure, monomer. The ACDS complex is made up of alpha, epsilon, beta, gamma and delta chains with a probable stoichiometry of (alpha(2)epsilon(2))(4)-beta(8)-(gamma(1)delta(1))(8) (Potential). Requires [Ni-Fe-S] cluster as cofactor.

The catalysed reaction is Co(I)-[corrinoid Fe-S protein] + acetyl-CoA + H(+) = methyl-Co(III)-[corrinoid Fe-S protein] + CO + CoA. Its pathway is one-carbon metabolism; methanogenesis from acetate. In terms of biological role, part of a complex that catalyzes the reversible cleavage of acetyl-CoA, allowing growth on acetate as sole source of carbon and energy. The alpha-epsilon complex generates CO from CO(2), while the beta subunit (this protein) combines the CO with CoA and a methyl group to form acetyl-CoA. The methyl group, which is incorporated into acetyl-CoA, is transferred to the beta subunit by a corrinoid iron-sulfur protein (the gamma-delta complex). This Methanosarcina thermophila protein is Acetyl-CoA decarbonylase/synthase complex subunit beta 1 (cdhC1).